The sequence spans 641 residues: 1-deoxy-D-xylulose-5-phosphate synthase (641 aa).

Residues His71 and 112–114 each bind thiamine diphosphate; that span reads SHA. Asp144 contributes to the Mg(2+) binding site. Thiamine diphosphate-binding positions include 145–146, Asn173, Tyr284, and Glu365; that span reads GA. Asn173 is a binding site for Mg(2+).

The protein belongs to the transketolase family. DXPS subfamily. In terms of assembly, homodimer. Mg(2+) is required as a cofactor. Thiamine diphosphate serves as cofactor.

The enzyme catalyses D-glyceraldehyde 3-phosphate + pyruvate + H(+) = 1-deoxy-D-xylulose 5-phosphate + CO2. It functions in the pathway metabolic intermediate biosynthesis; 1-deoxy-D-xylulose 5-phosphate biosynthesis; 1-deoxy-D-xylulose 5-phosphate from D-glyceraldehyde 3-phosphate and pyruvate: step 1/1. Functionally, catalyzes the acyloin condensation reaction between C atoms 2 and 3 of pyruvate and glyceraldehyde 3-phosphate to yield 1-deoxy-D-xylulose-5-phosphate (DXP). In Mycobacterium avium (strain 104), this protein is 1-deoxy-D-xylulose-5-phosphate synthase.